The primary structure comprises 599 residues: MDAFRDAILQRAPIETFALKTVQHFIQPQKQTKLAQDENQMLENMLRTLLQELVAAAAQSGEQIMQYGQLIDDDDDDDDIHGQIPHLLDVVLYLCEKEHVEGGMIFQLLEDLTEMSTMKNCKDVFGYIESKQDILGKQELFARGKLVMLRTCNQLLRRLSKANDVVFCGRILMFLAHFFPLSERSAVNIKGVFNTSNETKYEKDPPKGISVDFNFYKTFWSLQEYFCNPASLTSASTKWQKFSSSLAVVLNTFDAQPLSEEEGEANSLEEEAATFNIKYLTSSKLMGLELKDSSFRRHILLQCLIMFDYLRAPGKNDKDLPSETMKEELKSCEDRVKKLLEITPPKGKEFLRAVEHILEREKNWVWWKRDGCPPFEKQPIDKKSPNAGQKKRRQRWRLGNKELSQLWRWADQNPNALTDSQRVRTPDIADYWKPLAEDMDPSAGIEDEYHHKNNRVYCWKGLRFTARQDLEGFSRFTEMGIEGVVPVELLPPEVRSKYQAKPNEKAKRAKKEETKGGSHETEGNQIGVSNSEAEAEGGRGDAETMESDAIADTPTPEEQQRLGGSDTENGQEAGQIEDGETEEAGLMDTDLDHPPMPVS.

Disordered stretches follow at residues 376-395 (EKQP…RRQR) and 497-599 (KYQA…MPVS). Basic and acidic residues predominate over residues 502 to 522 (PNEKAKRAKKEETKGGSHETE). The span at 575–585 (QIEDGETEEAG) shows a compositional bias: acidic residues.

As to quaternary structure, component of the THO complex, which is composed of THO1, THO2, THO3, THO5, THO6 and THO7.

It is found in the nucleus. Its function is as follows. Acts as a component of the THO subcomplex of the TREX complex which is thought to couple mRNA transcription, processing and nuclear export. Contributes to the integrity of the endogenous trans-acting small interfering RNA (ta-siRNA) pathway. May process or transport a long RNA molecule so that it can be a template for secondary siRNA production. May participate in the trafficking of siRNA precursors to the ARGONAUTE catalytic center. Required for the generation of functional messenger ribonucleoproteins (mRNPs). Plays an important roles in plant innate immunity. The protein is THO complex subunit 1 (THO1) of Arabidopsis thaliana (Mouse-ear cress).